Consider the following 472-residue polypeptide: Coronin-6 (472 aa).

WD repeat units follow at residues 23–64 (QAYE…VLPL), 72–111 (KNYP…VWQI), 122–161 (EPII…IWNV), 165–204 (EVLL…IIDP), 210–251 (VAEQ…LWDP), and 256–296 (EPVA…YFEI). Positions 407-433 (KRNILDVRPPSGPRRSQSASDAPLSQQ) are disordered. Polar residues predominate over residues 420-433 (RRSQSASDAPLSQQ). The stretch at 430-464 (LSQQHTLETLLEEIKALRERVQAQEQRITALENML) forms a coiled coil.

This chain is Coronin-6 (CORO6), found in Homo sapiens (Human).